A 94-amino-acid polypeptide reads, in one-letter code: Pyrimidine/purine nucleoside phosphorylase (94 aa).

This sequence belongs to the nucleoside phosphorylase PpnP family.

The catalysed reaction is a purine D-ribonucleoside + phosphate = a purine nucleobase + alpha-D-ribose 1-phosphate. The enzyme catalyses adenosine + phosphate = alpha-D-ribose 1-phosphate + adenine. It carries out the reaction cytidine + phosphate = cytosine + alpha-D-ribose 1-phosphate. It catalyses the reaction guanosine + phosphate = alpha-D-ribose 1-phosphate + guanine. The catalysed reaction is inosine + phosphate = alpha-D-ribose 1-phosphate + hypoxanthine. The enzyme catalyses thymidine + phosphate = 2-deoxy-alpha-D-ribose 1-phosphate + thymine. It carries out the reaction uridine + phosphate = alpha-D-ribose 1-phosphate + uracil. It catalyses the reaction xanthosine + phosphate = alpha-D-ribose 1-phosphate + xanthine. Catalyzes the phosphorolysis of diverse nucleosides, yielding D-ribose 1-phosphate and the respective free bases. Can use uridine, adenosine, guanosine, cytidine, thymidine, inosine and xanthosine as substrates. Also catalyzes the reverse reactions. The chain is Pyrimidine/purine nucleoside phosphorylase from Cronobacter sakazakii (strain ATCC BAA-894) (Enterobacter sakazakii).